A 520-amino-acid chain; its full sequence is 2-isopropylmalate synthase (520 aa).

Positions Val-5–Tyr-267 constitute a Pyruvate carboxyltransferase domain. The Mn(2+) site is built by Asp-14, His-202, His-204, and Asn-238. Residues Arg-392–Val-520 are regulatory domain.

It belongs to the alpha-IPM synthase/homocitrate synthase family. LeuA type 1 subfamily. Homodimer. Requires Mn(2+) as cofactor.

The protein localises to the cytoplasm. It carries out the reaction 3-methyl-2-oxobutanoate + acetyl-CoA + H2O = (2S)-2-isopropylmalate + CoA + H(+). It functions in the pathway amino-acid biosynthesis; L-leucine biosynthesis; L-leucine from 3-methyl-2-oxobutanoate: step 1/4. Its function is as follows. Catalyzes the condensation of the acetyl group of acetyl-CoA with 3-methyl-2-oxobutanoate (2-ketoisovalerate) to form 3-carboxy-3-hydroxy-4-methylpentanoate (2-isopropylmalate). The chain is 2-isopropylmalate synthase from Yersinia pseudotuberculosis serotype O:1b (strain IP 31758).